Reading from the N-terminus, the 160-residue chain is Ribosomal RNA large subunit methyltransferase H (160 aa).

Positions 76 and 108 each coordinate S-adenosyl-L-methionine.

The protein belongs to the RNA methyltransferase RlmH family. As to quaternary structure, homodimer.

It localises to the cytoplasm. It carries out the reaction pseudouridine(1915) in 23S rRNA + S-adenosyl-L-methionine = N(3)-methylpseudouridine(1915) in 23S rRNA + S-adenosyl-L-homocysteine + H(+). In terms of biological role, specifically methylates the pseudouridine at position 1915 (m3Psi1915) in 23S rRNA. The chain is Ribosomal RNA large subunit methyltransferase H from Bradyrhizobium sp. (strain BTAi1 / ATCC BAA-1182).